Consider the following 3010-residue polypeptide: Genome polyprotein (3010 aa).

At S2 the chain carries N-acetylserine; by host. Positions 2–23 are interaction with STAT1; that stretch reads STNPKPQRKTKRNTNRRPQDVK. Residues 2–58 are interaction with EIF2AK2/PKR; the sequence is STNPKPQRKTKRNTNRRPQDVKFPGGGQIVGGVYLLPRRGPRLGVRATRKTSERSQP. The interaction with DDX3X stretch occupies residues 2 to 59; it reads STNPKPQRKTKRNTNRRPQDVKFPGGGQIVGGVYLLPRRGPRLGVRATRKTSERSQPR. The disordered stretch occupies residues 2–75; sequence STNPKPQRKT…PKARQPEGRA (74 aa). Over 2-168 the chain is Cytoplasmic; that stretch reads STNPKPQRKT…EDGVNYATGN (167 aa). Short sequence motifs (nuclear localization signal) lie at residues 5 to 13 and 38 to 43; these read PKPQRKTKR and PRRGPR. Basic residues predominate over residues 7-16; that stretch reads PQRKTKRNTN. Residues 32-47 are compositionally biased toward low complexity; it reads GGVYLLPRRGPRLGVR. At S53 the chain carries Phosphoserine; by host. Short sequence motifs (nuclear localization signal) lie at residues 58-64 and 66-71; these read PRGRRQP and PKARQP. Position 99 is a phosphoserine; by host (S99). Residues 112–152 are important for endoplasmic reticulum and mitochondrial localization; sequence PRRRSRNLGKVIDTLTCGFADLMGYIPLVGAPLGGVARALA. S116 carries the phosphoserine; by host PKA modification. Residues 122-173 form an interaction with APOA2 region; sequence VIDTLTCGFADLMGYIPLVGAPLGGVARALAHGVRVVEDGVNYATGNLPGCS. Residues 164–167 are important for lipid droplets localization; that stretch reads YATG. Residues 169-189 traverse the membrane as a helical segment; sequence LPGCSFSIFLLALLSCLTIPA. A propeptide spans 178–191 (ER anchor for the core protein, removed in mature form by host signal peptidase); sequence LLALLSCLTIPASA. Residues 190–358 are Lumenal-facing; the sequence is SAYEVRNVSG…AGAHWGVLAG (169 aa). N196, N209, N234, and N250 each carry an N-linked (GlcNAc...) asparagine; by host glycan. Residues 265–296 are important for fusion; it reads LVGAAAFCSAMYVGDLCGSVFLVSQLFTFSPR. N-linked (GlcNAc...) asparagine; by host glycosylation occurs at N305. The helical transmembrane segment at 359-379 threads the bilayer; that stretch reads LAYYSMVGNWAKVLIVMLLFA. Topologically, residues 380 to 725 are lumenal; it reads GVDGETRVTG…WDYIVILFLL (346 aa). The segment at 385–411 is HVR1; it reads TRVTGGQIARNAYSLTTLFSSGSAQNI. N-linked (GlcNAc...) (high mannose) asparagine; by host glycans are attached at residues N417, N423, N430, and N448. 4 cysteine pairs are disulfide-bonded: C429–C552, C452–C459, C486–C494, and C503–C508. The tract at residues 474 to 479 is HVR2; that stretch reads YAEQGG. The tract at residues 480–493 is CD81-binding 1; that stretch reads QDQRPYCWHYAPKP. N-linked (GlcNAc...) (high mannose) asparagine; by host glycosylation occurs at N532. N540 carries an N-linked (GlcNAc...) asparagine; by host glycan. The segment at 544–551 is CD81-binding 2; that stretch reads PPQGNWFG. An N-linked (GlcNAc...) (high mannose) asparagine; by host glycan is attached at N556. C564 and C569 form a disulfide bridge. N-linked (GlcNAc...) (high mannose) asparagine; by host glycosylation occurs at N576. 3 disulfides stabilise this stretch: C581–C585, C597–C620, and C607–C644. N623 and N645 each carry an N-linked (GlcNAc...) (high mannose) asparagine; by host glycan. A disulfide bond links C652 and C677. The segment at 660–671 is PKR/eIF2-alpha phosphorylation homology domain (PePHD); that stretch reads LELSPLLLSTTE. A helical membrane pass occupies residues 726–746; the sequence is LADARVCACLWMMLLIAQAEA. Over 747 to 757 the chain is Lumenal; that stretch reads ALENLVVLNAA. A helical transmembrane segment spans residues 758 to 778; that stretch reads SVAGAHGILSFLVFFCAAWYI. The Cytoplasmic portion of the chain corresponds to 779–781; sequence KGK. The chain crosses the membrane as a helical span at residues 782 to 803; that stretch reads LVPGAAYAFYGVWPLLLLLLAL. At 804–813 the chain is on the lumenal side; sequence PPRAYAMERE. The helical transmembrane segment at 814–834 threads the bilayer; the sequence is MAASCGGAVFVGLVLLTLSPY. At 835–838 the chain is on the cytoplasmic side; it reads YKEF. A helical transmembrane segment spans residues 839 to 859; the sequence is LARLIWWLQYFITRAEAHLQV. Over 860 to 881 the chain is Lumenal; that stretch reads WIPPLNIRGGRDAIILLACVVH. A helical membrane pass occupies residues 882–902; that stretch reads PELIFDITKLLLAILGPLMVL. The 124-residue stretch at 903–1026 folds into the Peptidase C18 domain; that stretch reads QASITQVPYF…SLEGQGWRLL (124 aa). The Cytoplasmic segment spans residues 903 to 1657; sequence QASITQVPYF…CMSADLEVVT (755 aa). Positions 904-1206 are protease NS2-3; sequence ASITQVPYFV…PVESMETTMR (303 aa). The S-palmitoyl cysteine; by host moiety is linked to residue C922. An interaction with host SCPS1 region spans residues 929 to 949; that stretch reads AGGHYVQMAFVKLTALTGTYV. Active-site for protease NS2 activity; shared with dimeric partner residues include H952, E972, and C993. The Peptidase S29 domain maps to 1027–1208; sequence APITAYSQQT…ESMETTMRSP (182 aa). Catalysis depends on charge relay system; for serine protease NS3 activity residues H1083 and D1107. C1123 and C1125 together coordinate Zn(2+). S1165 functions as the Charge relay system; for serine protease NS3 activity in the catalytic mechanism. 2 residues coordinate Zn(2+): C1171 and H1175. Residues 1217–1369 enclose the Helicase ATP-binding domain; that stretch reads PAVPQTFQVA…PNIEEVALSN (153 aa). 1230–1237 contributes to the ATP binding site; that stretch reads APTGSGKS. Mg(2+) contacts are provided by S1237 and E1317. The DECH box motif lies at 1316–1319; sequence DECH. The tract at residues 1486 to 1497 is RNA-binding; the sequence is QRRGRTGRGRRG. The helical transmembrane segment at 1658–1678 threads the bilayer; sequence STWVLVGGVLAALAAYCLTTG. The segment at 1679 to 1690 is NS3-binding; that stretch reads SVVIVGRIILSG. Residues 1679–1805 are Cytoplasmic-facing; it reads SVVIVGRIIL…SITSPLSTQN (127 aa). A helical membrane pass occupies residues 1806–1824; it reads TLLFNIWGGWVAAQLAPPS. At 1825 to 1828 the chain is on the lumenal side; that stretch reads AASA. The chain crosses the membrane as a helical span at residues 1829–1849; the sequence is FVGAGIAGAAVGSIGLGKVLV. D1850 is a topological domain (cytoplasmic). A helical transmembrane segment spans residues 1851-1871; it reads ILAGYGAGVAGALVAFKIMSG. Topologically, residues 1872–1881 are lumenal; sequence EVPSTEDLVN. The chain crosses the membrane as a helical span at residues 1882–1902; it reads LLPAILSPGALVVGVVCAAIL. Over 1903–1972 the chain is Cytoplasmic; the sequence is RRHVGPGEGA…WINEDCSTPC (70 aa). 2 S-palmitoyl cysteine; by host lipidation sites follow: C1968 and C1972. An intramembrane segment occupies 1973–2002; that stretch reads SGSWLRDVWDWICTVLTDFKTWLQSKLLPR. Residues 2003–2989 are Cytoplasmic-facing; that stretch reads LPGVPFFSCQ…YHSLSRARPR (987 aa). Zn(2+) is bound by residues C2011, C2029, C2031, and C2052. Positions 2120–2208 are FKBP8-binding; sequence EFFTEVDGVR…ASSSASQLSA (89 aa). A transcriptional activation region spans residues 2120–2332; it reads EFFTEVDGVR…PIPPPRRKRT (213 aa). Residues 2135–2139 are interaction with non-structural protein 4A; the sequence is PACKP. The interaction with host SKP2 stretch occupies residues 2189–2441; that stretch reads RLARGSPPSL…PCAAEESKLP (253 aa). S2194 carries the post-translational modification Phosphoserine; by host; in p56. A phosphoserine; by host; in p58 mark is found at S2197, S2201, S2204, S2207, and S2210. An ISDR region spans residues 2210–2249; it reads SLKATCTTHHDSPDVDLIEANLLWRQEMGGNITRVESENK. An interaction with EIF2AK2/PKR region spans residues 2210-2275; that stretch reads SLKATCTTHH…REPSVAAEIL (66 aa). The NS4B-binding stretch occupies residues 2249-2306; that stretch reads KVVILDSFDPLRAEEDEREPSVAAEILRKTKRFPPAMPIWARPDYNPPLLESWKDPDY. The SH3-binding signature appears at 2322-2325; sequence PPIP. The Nuclear localization signal signature appears at 2326–2334; sequence PPRRKRTVV. Residue K2350 forms a Glycyl lysine isopeptide (Lys-Gly) (interchain with G-Cter in ubiquitin) linkage. Polar residues predominate over residues 2351–2365; it reads TFGSSGSSAVDSGTA. The interval 2351–2407 is disordered; that stretch reads TFGSSGSSAVDSGTATAPPDQASDDGDQGSDVESYSSMPPLEGEPGDPDLSDGSWST. A V3 region spans residues 2354–2377; that stretch reads SSGSSAVDSGTATAPPDQASDDGD. S2448 and S2461 each carry phosphoserine; by host. In terms of domain architecture, RdRp catalytic spans 2633–2751; the sequence is PMGFSYDTRC…ICESAGTQED (119 aa). Residues D2639, D2737, and D2738 each coordinate Mg(2+). The chain crosses the membrane as a helical span at residues 2990-3010; that stretch reads WFMLCLLLLSVGVGIYLLPNR.

This sequence belongs to the hepacivirus polyprotein family. As to quaternary structure, homooligomer. Interacts with E1 (via C-terminus). Interacts with the non-structural protein 5A. Interacts (via N-terminus) with host STAT1 (via SH2 domain); this interaction results in decreased STAT1 phosphorylation and ubiquitin-mediated proteasome-dependent STAT1 degradation, leading to decreased IFN-stimulated gene transcription. Interacts with host STAT3; this interaction constitutively activates STAT3. Interacts with host LTBR receptor. Interacts with host TNFRSF1A receptor and possibly induces apoptosis. Interacts with host HNRPK. Interacts with host YWHAE. Interacts with host UBE3A/E6AP. Interacts with host DDX3X. Interacts with host APOA2. Interacts with host RXRA protein. Interacts with host SP110 isoform 3/Sp110b; this interaction sequesters the transcriptional corepressor SP110 away from the nucleus. Interacts with host CREB3 nuclear transcription protein; this interaction triggers cell transformation. Interacts with host ACY3. Interacts with host C1QR1. Interacts with host RBM24; this interaction, which enhances the interaction of the mature core protein with 5'-UTR, may inhibit viral translation and favor replication. Interacts with host EIF2AK2/PKR; this interaction induces the autophosphorylation of EIF2AK2. Part of the viral assembly initiation complex composed of NS2, E1, E2, NS3, NS4A, NS5A and the mature core protein. Forms a heterodimer with envelope glycoprotein E2. Interacts with mature core protein. Interacts with protease NS2. The heterodimer E1/E2 interacts with host CLDN1; this interaction plays a role in viral entry into host cell. Interacts with host SPSB2 (via C-terminus). Part of the viral assembly initiation complex composed of NS2, E1, E2, NS3, NS4A, NS5A and the mature core protein. Interacts with host NEURL3; this interaction prevents E1 binding to glycoprotein E2. In terms of assembly, forms a heterodimer with envelope glycoprotein E1. Interacts with host CD81 and SCARB1 receptors; these interactions play a role in viral entry into host cell. Interacts with host EIF2AK2/PKR; this interaction inhibits EIF2AK2 and probably allows the virus to evade the innate immune response. Interacts with host CD209/DC-SIGN and CLEC4M/DC-SIGNR. Interact with host SPCS1; this interaction is essential for viral particle assembly. Interacts with protease NS2. The heterodimer E1/E2 interacts with host CLDN1; this interaction plays a role in viral entry into host cell. Part of the viral assembly initiation complex composed of NS2, E1, E2, NS3, NS4A, NS5A and the mature core protein. Interacts with host SLC3A2/4F2hc; the interaction may facilitate viral entry into host cell. Interacts with human PLSCR1. As to quaternary structure, homohexamer. Homoheptamer. Interacts with protease NS2. Homodimer. Interacts with host SPCS1; this interaction is essential for viral particle assembly. Interacts with envelope glycoprotein E1. Interacts with envelope glycoprotein E2. Interacts with viroporin p7. Interacts with serine protease/helicase NS3. Part of the replication complex composed of NS2, NS3, NS4A, NS4B, NS5A and the RNA-directed RNA polymerase embedded in an ER-derived membranous web. Part of the viral assembly initiation complex composed of NS2, E1, E2, NS3, NS4A, NS5A and the mature core protein. In terms of assembly, interacts with protease NS2. Interacts with non-structural protein 4A; this interaction stabilizes the folding of NS3 serine protease. NS3-NS4A interaction is essential for NS3 activation and allows membrane anchorage of the latter. NS3/NS4A complex also prevents phosphorylation of host IRF3, thus preventing the establishment of dsRNA induced antiviral state. Interacts with host MAVS; this interaction leads to the cleavage and inhibition of host MAVS. Interacts with host TICAM1; this interaction leads to the cleavage and inhibition of host TICAM1. Interacts with host TANK-binding kinase/TBK1; this interaction results in the inhibition of the association between TBK1 and IRF3, which leads to the inhibition of IRF3 activation. Interacts with host RBM24. Part of the replication complex composed of NS2, NS3, NS4A, NS4B, NS5A and the RNA-directed RNA polymerase embedded in an ER-derived membranous web. Part of the viral assembly initiation complex composed of NS2, E1, E2, NS3, NS4A, NS5A and the mature core protein. As to quaternary structure, interacts with NS3 serine protease; this interaction stabilizes the folding of NS3 serine protease. NS3-NS4A interaction is essential for NS3 activation and allows membrane anchorage of the latter. Interacts with non-structural protein 5A (via N-terminus). Part of the replication complex composed of NS2, NS3, NS4A, NS4B, NS5A and the RNA-directed RNA polymerase embedded in an ER-derived membranous web. Part of the viral assembly initiation complex composed of NS2, E1, E2, NS3, NS4A, NS5A and the mature core protein. Homomultimer. Interacts with non-structural protein NS5A. Interacts with host PLA2G4C; this interaction likely initiates the recruitment of replication complexes to lipid droplets. Interacts with host STING; this interaction disrupts the interaction between STING and TBK1 thereby suppressing the interferon signaling. Part of the replication complex composed of NS2, NS3, NS4A, NS4B, NS5A and the RNA-directed RNA polymerase embedded in an ER-derived membranous web. In terms of assembly, monomer. Homodimer; dimerization is required for RNA-binding. Interacts with the mature core protein. Interacts (via N-terminus) with non-structural protein 4A. Interacts with non-structural protein 4B. Interacts (via region D2) with RNA-directed RNA polymerase. Part of the viral assembly initiation complex composed of NS2, E1, E2, NS3, NS4A, NS5A and the mature core protein. Part of the replication complex composed of NS2, NS3, NS4A, NS4B, NS5A and the RNA-directed RNA polymerase embedded in an ER-derived membranous web. Interacts with host GRB2. Interacts with host BIN1. Interacts with host PIK3R1. Interacts with host SRCAP. Interacts with host FKBP8. Interacts (via C-terminus) with host VAPB (via MSP domain). Interacts with host EIF2AK2/PKR; this interaction leads to disruption of EIF2AK2 dimerization by NS5A and probably allows the virus to evade the innate immune response. Interacts (via N-terminus) with host PACSIN2 (via N-terminus); this interaction attenuates protein kinase C alpha-mediated phosphorylation of PACSIN2 by disrupting the interaction between PACSIN2 and PRKCA. Interacts (via N-terminus) with host SRC kinase (via SH2 domain). Interacts with most Src-family kinases. Interacts with host IFI27 and SKP2; promotes the ubiquitin-mediated proteasomal degradation of NS5A. Interacts with host GPS2. Interacts with host TNFRSF21; this interaction allows the modulation by the virus of JNK, p38 MAPK, STAT3, and Akt signaling pathways in a DR6-dependent manner. Interacts (via N-terminus) with host CIDEB (via N-terminus); this interaction seems to regulate the association of HCV particles with APOE. Interacts with host CHKA/Choline Kinase-alpha; CHKA bridges host PI4KA and NS5A and potentiates NS5A-stimulated PI4KA activity, which then facilitates the targeting of the ternary complex to the ER for viral replication. Interacts with host SPSB2 (via C-terminus); this interaction targets NS5A for ubiquitination and degradation. Interacts with host RAB18; this interaction may promote the association of NS5A and other replicase components with lipid droplets. Interacts (via region D2) with host PPIA/CYPA; the interaction stimulates RNA-binding ability of NS5A and is dependent on the peptidyl-prolyl cis-trans isomerase activity of PPIA/CYPA. Interacts with host TRIM14; this interaction induces the degradation of NS5A. As to quaternary structure, homooligomer. Interacts with non-structural protein 5A. Interacts with host VAPB. Interacts with host PRK2/PKN2. Interacts with host HNRNPA1 and SEPT6; these interactions facilitate viral replication. Part of the replication complex composed of NS2, NS3, NS4A, NS4B, NS5A and the RNA-directed RNA polymerase. Zn(2+) is required as a cofactor. Mg(2+) serves as cofactor. In terms of processing, specific enzymatic cleavages in vivo yield mature proteins. The structural proteins, core, E1, E2 and p7 are produced by proteolytic processing by host signal peptidases. The core protein precursor is synthesized as a 23 kDa, which is retained in the ER membrane through the hydrophobic signal peptide. Cleavage by the signal peptidase releases the 21 kDa mature core protein. The cleavage of the core protein precursor occurs between aminoacids 176 and 188 but the exact cleavage site is not known. Some degraded forms of the core protein appear as well during the course of infection. The other proteins (p7, NS2, NS3, NS4A, NS4B, NS5A and NS5B) are cleaved by the viral proteases. Autoprocessing between NS2 and NS3 is mediated by the NS2 cysteine protease catalytic domain and regulated by the NS3 N-terminal domain. Post-translationally, phosphorylated by host PKC and PKA. Ubiquitinated; mediated by UBE3A and leading to core protein subsequent proteasomal degradation. In terms of processing, highly N-glycosylated. Post-translationally, palmitoylation is required for NS2/3 autoprocessing and E2 recruitment to membranes. Palmitoylated. This modification may play a role in its polymerization or in protein-protein interactions. In terms of processing, phosphorylated on serines in a basal form termed p56. p58 is a hyperphosphorylated form of p56. p56 and p58 coexist in the cell in roughly equivalent amounts. Hyperphosphorylation is dependent on the presence of NS4A. Host CSNK1A1/CKI-alpha or RPS6KB1 kinases may be responsible for NS5A phosphorylation. Post-translationally, tyrosine phosphorylation is essential for the interaction with host SRC. Ubiquitinated. Ubiquitination, most probably at Lys-2350, mediated by host IFI27 and SKP2 leads to proteasomal degradation, restricting viral infection. Ubiquitination by host TRIM22 leads to interruption of viral replication. In terms of processing, the N-terminus is phosphorylated by host PRK2/PKN2.

It localises to the host endoplasmic reticulum membrane. It is found in the host mitochondrion membrane. The protein resides in the virion. Its subcellular location is the host cytoplasm. The protein localises to the host nucleus. It localises to the host lipid droplet. It is found in the virion membrane. The protein resides in the host mitochondrion. Its subcellular location is the host cell membrane. The protein localises to the host perinuclear region. The enzyme catalyses Hydrolysis of four peptide bonds in the viral precursor polyprotein, commonly with Asp or Glu in the P6 position, Cys or Thr in P1 and Ser or Ala in P1'.. The catalysed reaction is a ribonucleoside 5'-triphosphate + H2O = a ribonucleoside 5'-diphosphate + phosphate + H(+). It catalyses the reaction ATP + H2O = ADP + phosphate + H(+). It carries out the reaction RNA(n) + a ribonucleoside 5'-triphosphate = RNA(n+1) + diphosphate. With respect to regulation, inhibited by the antiviral drug hexamethylene amiloride. Inhibition by amantadine appears to be genotype-dependent. Also inhibited by long-alkyl-chain iminosugar derivatives. Activity is up-regulated by PRK2/PKN2-mediated phosphorylation. Packages viral RNA to form a viral nucleocapsid, and promotes virion budding. Participates in the viral particle production as a result of its interaction with the non-structural protein 5A. Binds RNA and may function as a RNA chaperone to induce the RNA structural rearrangements taking place during virus replication. Modulates viral translation initiation by interacting with viral IRES and 40S ribosomal subunit. Affects various cell signaling pathways, host immunity and lipid metabolism. Prevents the establishment of cellular antiviral state by blocking the interferon-alpha/beta (IFN-alpha/beta) and IFN-gamma signaling pathways and by blocking the formation of phosphorylated STAT1 and promoting ubiquitin-mediated proteasome-dependent degradation of STAT1. Activates STAT3 leading to cellular transformation. Regulates the activity of cellular genes, including c-myc and c-fos. May repress the promoter of p53, and sequester CREB3 and SP110 isoform 3/Sp110b in the cytoplasm. Represses cell cycle negative regulating factor CDKN1A, thereby interrupting an important check point of normal cell cycle regulation. Targets transcription factors involved in the regulation of inflammatory responses and in the immune response: suppresses TNF-induced NF-kappa-B activation, and activates AP-1. Binds to dendritic cells (DCs) via C1QR1, resulting in down-regulation of T-lymphocytes proliferation. Alters lipid metabolism by interacting with hepatocellular proteins involved in lipid accumulation and storage. Induces up-regulation of FAS promoter activity, and thereby contributes to the increased triglyceride accumulation in hepatocytes (steatosis). In terms of biological role, forms a heterodimer with envelope glycoprotein E2, which mediates virus attachment to the host cell, virion internalization through clathrin-dependent endocytosis and fusion with host membrane. Fusion with the host cell is most likely mediated by both E1 and E2, through conformational rearrangements of the heterodimer required for fusion rather than a classical class II fusion mechanism. E1/E2 heterodimer binds host apolipoproteins such as APOB and APOE thereby forming a lipo-viro-particle (LVP). APOE associated to the LVP allows the initial virus attachment to cell surface receptors such as the heparan sulfate proteoglycans (HSPGs), syndecan-1 (SDC1), syndecan-1 (SDC2), the low-density lipoprotein receptor (LDLR) and scavenger receptor class B type I (SCARB1). The cholesterol transfer activity of SCARB1 allows E2 exposure and binding of E2 to SCARB1 and the tetraspanin CD81. E1/E2 heterodimer binding on CD81 activates the epithelial growth factor receptor (EGFR) signaling pathway. Diffusion of the complex E1-E2-EGFR-SCARB1-CD81 to the cell lateral membrane allows further interaction with Claudin 1 (CLDN1) and occludin (OCLN) to finally trigger HCV entry. Functionally, forms a heterodimer with envelope glycoprotein E1, which mediates virus attachment to the host cell, virion internalization through clathrin-dependent endocytosis and fusion with host membrane. Fusion with the host cell is most likely mediated by both E1 and E2, through conformational rearrangements of the heterodimer required for fusion rather than a classical class II fusion mechanism. The interaction between envelope glycoprotein E2 and host apolipoprotein E/APOE allows the proper assembly, maturation and infectivity of the viral particles. This interaction is probably promoted via the up-regulation of cellular autophagy by the virus. E1/E2 heterodimer binds host apolipoproteins such as APOB and APOE thereby forming a lipo-viro-particle (LVP). APOE associated to the LVP allows the initial virus attachment to cell surface receptors such as the heparan sulfate proteoglycans (HSPGs), syndecan-1 (SDC1), syndecan-1 (SDC2), the low-density lipoprotein receptor (LDLR) and scavenger receptor class B type I (SCARB1). The cholesterol transfer activity of SCARB1 allows E2 exposure and binding of E2 to SCARB1 and the tetraspanin CD81. E1/E2 heterodimer binding on CD81 activates the epithelial growth factor receptor (EGFR) signaling pathway. Diffusion of the complex E1-E2-EGFR-SCARB1-CD81 to the cell lateral membrane allows further interaction with Claudin 1 (CLDN1) and occludin (OCLN) to finally trigger HCV entry. Inhibits host EIF2AK2/PKR activation, preventing the establishment of an antiviral state. Viral ligand for CD209/DC-SIGN and CLEC4M/DC-SIGNR, which are respectively found on dendritic cells (DCs), and on liver sinusoidal endothelial cells and macrophage-like cells of lymph node sinuses. These interactions allow the capture of circulating HCV particles by these cells and subsequent facilitated transmission to permissive cells such as hepatocytes and lymphocyte subpopulations. The interaction between E2 and host amino acid transporter complex formed by SLC3A2 and SLC7A5/LAT1 may facilitate viral entry into host cell. Its function is as follows. Ion channel protein that acts as a viroporin and plays an essential role in the assembly, envelopment and secretion of viral particles. Regulates the host cell secretory pathway, which induces the intracellular retention of viral glycoproteins and favors assembly of viral particles. Creates a pore in acidic organelles and releases Ca(2+) and H(+) in the cytoplasm of infected cells, leading to a productive viral infection. High levels of cytoplasmic Ca(2+) may trigger membrane trafficking and transport of viral ER-associated proteins to viroplasms, sites of viral genome replication. This ionic imbalance induces the assembly of the inflammasome complex, which triggers the maturation of pro-IL-1beta into IL-1beta through the action of caspase-1. Targets also host mitochondria and induces mitochondrial depolarization. In addition of its role as a viroporin, acts as a lipid raft adhesion factor. Cysteine protease required for the proteolytic auto-cleavage between the non-structural proteins NS2 and NS3. The N-terminus of NS3 is required for the function of NS2 protease (active region NS2-3). Promotes the initiation of viral particle assembly by mediating the interaction between structural and non-structural proteins. In terms of biological role, displays three enzymatic activities: serine protease with a chymotrypsin-like fold, NTPase and RNA helicase. NS3 serine protease, in association with NS4A, is responsible for the cleavages of NS3-NS4A, NS4A-NS4B, NS4B-NS5A and NS5A-NS5B. The NS3/NS4A complex prevents phosphorylation of host IRF3, thus preventing the establishment of dsRNA induced antiviral state. The NS3/NS4A complex induces host amino acid transporter component SLC3A2, thus contributing to HCV propagation. NS3 RNA helicase binds to RNA and unwinds both dsDNA and dsRNA in the 3' to 5' direction, and likely resolves RNA complicated stable secondary structures in the template strand. Binds a single ATP and catalyzes the unzipping of a single base pair of dsRNA. Inhibits host antiviral proteins TBK1 and IRF3 thereby preventing the establishment of an antiviral state. Cleaves host MAVS/CARDIF thereby preventing the establishment of an antiviral state. Cleaves host TICAM1/TRIF, thereby disrupting TLR3 signaling and preventing the establishment of an antiviral state. Functionally, peptide cofactor which forms a non-covalent complex with the N-terminal of NS3 serine protease. The NS3/NS4A complex prevents phosphorylation of host IRF3, thus preventing the establishment of dsRNA induced antiviral state. The NS3/NS4A complex induces host amino acid transporter component SLC3A2, thus contributing to HCV propagation. Its function is as follows. Induces a specific membrane alteration that serves as a scaffold for the virus replication complex. This membrane alteration gives rise to the so-called ER-derived membranous web that contains the replication complex. NS4B self-interaction contributes to its function in membranous web formation. Promotes host TRIF protein degradation in a CASP8-dependent manner thereby inhibiting host TLR3-mediated interferon signaling. Disrupts the interaction between STING and TBK1 contributing to the inhibition of interferon signaling. Phosphorylated protein that is indispensable for viral replication and assembly. Both hypo- and hyperphosphorylated states are required for the viral life cycle. The hyperphosphorylated form of NS5A is an inhibitor of viral replication. Involved in RNA-binding and especially in binding to the viral genome. Zinc is essential for RNA-binding. Participates in the viral particle production as a result of its interaction with the mature viral core protein. Its interaction with host VAPB may target the viral replication complex to vesicles. Down-regulates viral IRES translation initiation. Mediates interferon resistance, presumably by interacting with and inhibiting host EIF2AK2/PKR. Prevents BIN1-induced apoptosis. Acts as a transcriptional activator of some host genes important for viral replication when localized in the nucleus. Via the interaction with host PACSIN2, modulates lipid droplet formation in order to promote virion assembly. Modulates TNFRSF21/DR6 signaling pathway for viral propagation. In terms of biological role, RNA-dependent RNA polymerase that performs primer-template recognition and RNA synthesis during viral replication. Initiates RNA transcription/replication at a flavin adenine dinucleotide (FAD), resulting in a 5'- FAD cap on viral RNAs. In this way, recognition of viral 5' RNA by host pattern recognition receptors can be bypassed, thereby evading activation of antiviral pathways. The polypeptide is Genome polyprotein (Homo sapiens (Human)).